The chain runs to 330 residues: MPQTRLTDRFGRTVNYVRLSVTDRCDFRCVYCMAEDMTFLPRQQVLTLEEIARLARNFVALGTEKIRLTGGEPLVRRDILELVREVGTYGLRDFAMTTNGSQLPTMAESLRKAGLQRLNISLDSLDADKFRAITRTGNLSQVLDGIDAARDAGFRGIKLNTVVMKGRNDEEIPELIEFARQKQVDISFIEEMPLGEISEHDRGLALCTSEEVRDIIRRHHELIPATEDSGGPARYFRMPDSEVRVGFISPHSHNFCSTCNRVRVTVEGRLLLCLGNEHSVDLRRVLRGHPVTDDKLQEAIIKAMDLKPERHHFSSNGDVQILRFMNTTGG.

The region spanning 9-225 is the Radical SAM core domain; sequence RFGRTVNYVR…IRRHHELIPA (217 aa). Arg-18 lines the GTP pocket. The [4Fe-4S] cluster site is built by Cys-25 and Cys-29. Tyr-31 lines the S-adenosyl-L-methionine pocket. Cys-32 is a [4Fe-4S] cluster binding site. Arg-67 provides a ligand contact to GTP. Residue Gly-71 participates in S-adenosyl-L-methionine binding. Thr-97 contributes to the GTP binding site. Ser-121 serves as a coordination point for S-adenosyl-L-methionine. Residue Lys-158 coordinates GTP. Residue Met-192 coordinates S-adenosyl-L-methionine. Cys-256 and Cys-259 together coordinate [4Fe-4S] cluster. 261–263 lines the GTP pocket; sequence RVR. Cys-273 serves as a coordination point for [4Fe-4S] cluster.

This sequence belongs to the radical SAM superfamily. MoaA family. As to quaternary structure, monomer and homodimer. [4Fe-4S] cluster is required as a cofactor.

The enzyme catalyses GTP + AH2 + S-adenosyl-L-methionine = (8S)-3',8-cyclo-7,8-dihydroguanosine 5'-triphosphate + 5'-deoxyadenosine + L-methionine + A + H(+). It functions in the pathway cofactor biosynthesis; molybdopterin biosynthesis. Functionally, catalyzes the cyclization of GTP to (8S)-3',8-cyclo-7,8-dihydroguanosine 5'-triphosphate. The polypeptide is GTP 3',8-cyclase (Marinobacter nauticus (strain ATCC 700491 / DSM 11845 / VT8) (Marinobacter aquaeolei)).